The following is a 194-amino-acid chain: Elongation factor P (194 aa).

This sequence belongs to the elongation factor P family.

It is found in the cytoplasm. Its pathway is protein biosynthesis; polypeptide chain elongation. Functionally, involved in peptide bond synthesis. Stimulates efficient translation and peptide-bond synthesis on native or reconstituted 70S ribosomes in vitro. Probably functions indirectly by altering the affinity of the ribosome for aminoacyl-tRNA, thus increasing their reactivity as acceptors for peptidyl transferase. In Hydrogenobaculum sp. (strain Y04AAS1), this protein is Elongation factor P.